The sequence spans 287 residues: Pyridoxal kinase PdxY (287 aa).

Residues Ser-9 and 44–45 (TQ) contribute to the substrate site. Residues Asp-111, Ala-143, Glu-148, Lys-181, and 208–211 (RPLV) contribute to the ATP site. Residue Asp-223 participates in substrate binding.

This sequence belongs to the pyridoxine kinase family. PdxY subfamily. Homodimer. Mg(2+) serves as cofactor.

The catalysed reaction is pyridoxal + ATP = pyridoxal 5'-phosphate + ADP + H(+). The protein operates within cofactor metabolism; pyridoxal 5'-phosphate salvage; pyridoxal 5'-phosphate from pyridoxal: step 1/1. In terms of biological role, pyridoxal kinase involved in the salvage pathway of pyridoxal 5'-phosphate (PLP). Catalyzes the phosphorylation of pyridoxal to PLP. In Photorhabdus laumondii subsp. laumondii (strain DSM 15139 / CIP 105565 / TT01) (Photorhabdus luminescens subsp. laumondii), this protein is Pyridoxal kinase PdxY.